Here is a 477-residue protein sequence, read N- to C-terminus: Glycogen synthase (477 aa).

K15 lines the ADP-alpha-D-glucose pocket.

The protein belongs to the glycosyltransferase 1 family. Bacterial/plant glycogen synthase subfamily.

The enzyme catalyses [(1-&gt;4)-alpha-D-glucosyl](n) + ADP-alpha-D-glucose = [(1-&gt;4)-alpha-D-glucosyl](n+1) + ADP + H(+). It functions in the pathway glycan biosynthesis; glycogen biosynthesis. Synthesizes alpha-1,4-glucan chains using ADP-glucose. The chain is Glycogen synthase from Streptococcus pneumoniae serotype 4 (strain ATCC BAA-334 / TIGR4).